The sequence spans 250 residues: Hemocyanin, units C and D (250 aa).

His-1 serves as a coordination point for Cu cation. The segment at 1–106 (HGSTKWCPSP…RAWIEPVTSA (106 aa)) is unit C. Cys-7 and Cys-18 are oxidised to a cystine. Residues 19–21 (CHH) constitute a cross-link (2'-(S-cysteinyl)-histidine (Cys-His)). His-21 and His-143 together coordinate Cu cation. The segment at 107–250 (VRIRKNLNDL…DAQDVIYNNH (144 aa)) is unit D. A disulfide bridge links Cys-149 with Cys-160. Residues 161-163 (CLH) constitute a cross-link (2'-(S-cysteinyl)-histidine (Cys-His)). His-172 provides a ligand contact to Cu cation.

The protein belongs to the tyrosinase family. Hemocyanin subfamily. Decamers of large identical subunits (390 kDa), each containing 8 globular oxygen-binding functional units. Cu(2+) is required as a cofactor.

Its function is as follows. Hemocyanins are copper-containing oxygen carriers occurring freely dissolved in the hemolymph of many mollusks and arthropods. The polypeptide is Hemocyanin, units C and D (Sepia officinalis (Common cuttlefish)).